A 123-amino-acid polypeptide reads, in one-letter code: Large ribosomal subunit protein bL12 (123 aa).

Belongs to the bacterial ribosomal protein bL12 family. Homodimer. Part of the ribosomal stalk of the 50S ribosomal subunit. Forms a multimeric L10(L12)X complex, where L10 forms an elongated spine to which 2 to 4 L12 dimers bind in a sequential fashion. Binds GTP-bound translation factors.

Forms part of the ribosomal stalk which helps the ribosome interact with GTP-bound translation factors. Is thus essential for accurate translation. This is Large ribosomal subunit protein bL12 from Geobacillus kaustophilus (strain HTA426).